Consider the following 80-residue polypeptide: uncharacterized protein (80 aa).

A helical membrane pass occupies residues 10-29 (FVAREYPLVVVPFIYFVLFL).

The protein localises to the membrane. This is an uncharacterized protein from Saccharomyces cerevisiae (strain ATCC 204508 / S288c) (Baker's yeast).